The chain runs to 1140 residues: DNA damage-binding protein 1 (1140 aa).

N-acetylserine is present on S2. Positions 2-768 are interaction with CDT1; that stretch reads SYNYVVTAQK…QALSSSVSSS (767 aa). Residues 13–356 are WD repeat beta-propeller A; it reads TAVNGCVTGH…VVAMETFTNL (344 aa). The tract at residues 391 to 708 is WD repeat beta-propeller B; Interaction with CUL4A; that stretch reads RNGIGIHEHA…LTIGTIDEIQ (318 aa). Residues 709–1043 form a WD repeat beta-propeller C region; it reads KLHIRTVPLY…NGMIGLVTSL (335 aa). The tract at residues 771 to 1140 is interaction with CDT1 and CUL4A; that stretch reads FSSSTAPHET…KVVEELTRIH (370 aa). Residue K1067 is modified to N6-acetyllysine. A Glycyl lysine isopeptide (Lys-Gly) (interchain with G-Cter in SUMO2) cross-link involves residue K1121. Phosphothreonine is present on T1125.

The protein belongs to the DDB1 family. In terms of assembly, component of the UV-DDB complex which includes DDB1 and DDB2; the heterodimer dimerizes to give rise to a heterotetramer when bound to damaged DNA. The UV-DDB complex interacts with monoubiquitinated histone H2A and binds to XPC via the DDB2 subunit. Component of numerous DCX (DDB1-CUL4-X-box) E3 ubiquitin-protein ligase complexes which consist of a core of DDB1, CUL4A or CUL4B and RBX1. DDB1 may recruit specific substrate targeting subunits to the DCX complex. These substrate targeting subunits are generally known as DCAF (DDB1- and CUL4-associated factor) or CDW (CUL4-DDB1-associated WD40-repeat) proteins. Interacts with AMBRA1, ATG16L1, BTRC, CRBN, DCAF1, DCAF4, DCAF5, DCAF6, DCAF7, DCAF8, DCAF9, DCAF10, DCAF11, DCAF12, DCAF15, DCAF16, DCAF17, DDA1, DET1, DTL, ERCC8, FBXW5, FBXW8, GRWD1, KATNB1, NLE1, NUP43, PAFAH1B1, PHIP, PWP1, RBBP4, RBBP5, RBBP7, COP1, SNRNP40, DCAF1, WDR5, WDR5B, WDR12, WDR26, WDR39, WDR42, WDR53, WDR59, WDR61, WSB1, WSB2, LRWD1 and WDTC1. DCX complexes may associate with the COP9 signalosome, and this inhibits the E3 ubiquitin-protein ligase activity of the complex. Interacts with NF2, TSC1 and TSC2. Interacts with AGO1 and AGO2. Associates with the E3 ligase complex containing DYRK2, EDD/UBR5, DDB1 and DCAF1 proteins (EDVP complex). Interacts directly with DYRK2. DCX(DTL) complex interacts with FBXO11; does not ubiquitinate and degradate FBXO11. Interacts with TRPC4AP. Interacts with CRY1 and CRY2. The DDB1-CUL4A complex interacts with CRY1. May also interact with DCUN1D1, DCUN1D2, DCUN1D3 and DCUN1D5. Component of the DCX(DCAF13) E3 ubiquitin ligase complex, at least composed of CUL4 (CUL4A or CUL4B), DDB1, DCAF13 and RBX1. Interacts with DCAF13 (via WD40 domain). In terms of processing, phosphorylated by ABL1. Post-translationally, ubiquitinated by CUL4A. Subsequently degraded by ubiquitin-dependent proteolysis. Acetylated, promoting interaction with CUL4 (CUL4A or CUL4B) and subsequent formation of DCX (DDB1-CUL4-X-box) E3 ubiquitin-protein ligase complexes. Deacetylation by SIRT7 impairs the interaction with CUL4 (CUL4A or CUL4B) and formation of DCX (DDB1-CUL4-X-box) E3 ubiquitin-protein ligase complexes.

The protein resides in the cytoplasm. Its subcellular location is the nucleus. It participates in protein modification; protein ubiquitination. Its function is as follows. Protein, which is both involved in DNA repair and protein ubiquitination, as part of the UV-DDB complex and DCX (DDB1-CUL4-X-box) complexes, respectively. Core component of the UV-DDB complex (UV-damaged DNA-binding protein complex), a complex that recognizes UV-induced DNA damage and recruit proteins of the nucleotide excision repair pathway (the NER pathway) to initiate DNA repair. The UV-DDB complex preferentially binds to cyclobutane pyrimidine dimers (CPD), 6-4 photoproducts (6-4 PP), apurinic sites and short mismatches. Also functions as a component of numerous distinct DCX (DDB1-CUL4-X-box) E3 ubiquitin-protein ligase complexes which mediate the ubiquitination and subsequent proteasomal degradation of target proteins. The functional specificity of the DCX E3 ubiquitin-protein ligase complex is determined by the variable substrate recognition component recruited by DDB1. DCX(DDB2) (also known as DDB1-CUL4-ROC1, CUL4-DDB-ROC1 and CUL4-DDB-RBX1) may ubiquitinate histone H2A, histone H3 and histone H4 at sites of UV-induced DNA damage. The ubiquitination of histones may facilitate their removal from the nucleosome and promote subsequent DNA repair. DCX(DDB2) also ubiquitinates XPC, which may enhance DNA-binding by XPC and promote NER. DCX(DTL) plays a role in PCNA-dependent polyubiquitination of CDT1 and MDM2-dependent ubiquitination of TP53 in response to radiation-induced DNA damage and during DNA replication. DCX(ERCC8) (the CSA complex) plays a role in transcription-coupled repair (TCR). The DDB1-CUL4A-DTL E3 ligase complex regulates the circadian clock function by mediating the ubiquitination and degradation of CRY1. DDB1-mediated CRY1 degradation promotes FOXO1 protein stability and FOXO1-mediated gluconeogenesis in the liver. By acting on TET dioxygenses, essential for oocyte maintenance at the primordial follicle stage, hence essential for female fertility. Maternal factor required for proper zygotic genome activation and genome reprogramming. This is DNA damage-binding protein 1 (DDB1) from Pongo abelii (Sumatran orangutan).